The primary structure comprises 440 residues: uncharacterized protein (440 aa).

Disordered regions lie at residues 49 to 81 and 162 to 295; these read CPPA…EPSL and LPKP…CASE. The span at 55–80 shows a compositional bias: polar residues; sequence HGHSSLRTNLNSSPPRCPQNPGTEPS. The segment covering 249-266 has biased composition (basic and acidic residues); that stretch reads YREELSNTKSRFSEDKGS. Low complexity predominate over residues 274–284; the sequence is SSNSSEPGLPG.

This sequence belongs to the tymoviridae protein p69 family.

This is an uncharacterized protein from Erysimum latent virus (ELV).